Here is a 157-residue protein sequence, read N- to C-terminus: Protein-export protein SecB (157 aa).

The protein belongs to the SecB family. As to quaternary structure, homotetramer, a dimer of dimers. One homotetramer interacts with 1 SecA dimer.

The protein resides in the cytoplasm. Functionally, one of the proteins required for the normal export of preproteins out of the cell cytoplasm. It is a molecular chaperone that binds to a subset of precursor proteins, maintaining them in a translocation-competent state. It also specifically binds to its receptor SecA. This Alcanivorax borkumensis (strain ATCC 700651 / DSM 11573 / NCIMB 13689 / SK2) protein is Protein-export protein SecB.